Consider the following 251-residue polypeptide: MLGARLRLWVCALCSVCSMSVLRAYPNASPLLGSSWGGLIHLYTATARNSYHLQIHKNGHVDGAPHQTIYSALMIRSEDAGFVVITGVMSRRYLCMDFRGNIFGSHYFDPENCRFQHQTLENGYDVYHSPQYHFLVSLGRAKRAFLPGMNPPPYSQFLSRRNEIPLIHFNTPIPRRHTRSAEDDSERDPLNVLKPRARMTPAPASCSQELPSAEDNSPMASDPLGVVRGGRVNTHAGGTGPEGCRPFAKFI.

The signal sequence occupies residues 1–24; the sequence is MLGARLRLWVCALCSVCSMSVLRA. Cys95 and Cys113 form a disulfide bridge. O-linked (GalNAc) threonine glycans are attached at residues Thr171 and Thr178. The tract at residues 172–221 is disordered; that stretch reads PIPRRHTRSAEDDSERDPLNVLKPRARMTPAPASCSQELPSAEDNSPMAS. Phosphoserine; by FAM20C is present on Ser180. Residues 205–219 show a composition bias toward polar residues; sequence SCSQELPSAEDNSPM.

This sequence belongs to the heparin-binding growth factors family. As to quaternary structure, interacts with FGFR1, FGFR2, FGFR3 and FGFR4. Affinity between fibroblast growth factors (FGFs) and their receptors is increased by KL and heparan sulfate glycosaminoglycans that function as coreceptors. In terms of processing, following secretion this protein is inactivated by cleavage into a N-terminal fragment and a C-terminal fragment. The processing is effected by proprotein convertases. Post-translationally, O-glycosylated at Thr-171 and Thr-178 by GALNT3 and glycosylation of Thr-178 requires previous glycosylation at Thr171. Glycosylation is necessary for secretion; it blocks processing by proprotein convertases when the O-glycan is alpha 2,6-sialylated. Competition between proprotein convertase cleavage and block of cleavage by O-glycosylation determines the level of secreted active FGF23. Phosphorylation at Ser-180 mediated by FAM20C slows down glycosylation at Thr-178 notably. As to expression, expressed in osteogenic cells particularly during phases of active bone remodeling. In adult trabecular bone, expressed in osteocytes and flattened bone-lining cells (inactive osteoblasts).

It localises to the secreted. Functionally, regulator of phosphate homeostasis. Inhibits renal tubular phosphate transport by reducing SLC34A1 levels. Up-regulates EGR1 expression in the presence of KL. Acts directly on the parathyroid to decrease PTH secretion. Regulator of vitamin-D metabolism. Negatively regulates osteoblast differentiation and matrix mineralization. This Homo sapiens (Human) protein is Fibroblast growth factor 23 (FGF23).